The sequence spans 143 residues: Papain inhibitor (143 aa).

The N-terminal stretch at 1-33 (MREFRRVRRVRFAACALVAAATGITLAAGPASA) is a signal peptide.

Monomer.

The protein localises to the secreted. Stress protein produced under hyperthermal stress conditions. Serves as a glutamine and lysine donor substrate for transglutaminase. Inhibits the cysteine proteases papain and bromelain as well as the bovine serine protease trypsin. Has hardly any or no effect on subtilisin, bovine chymotrypsin, proteinase K from T.album, transglutaminase-activating metalloproteinase (TAMEP) from S.mobaraensis, dispase from B.polymyxa, thermolysin from B.thermoproteolyticus or collagenase from C.histolyticum. In Streptomyces mobaraensis (Streptoverticillium mobaraense), this protein is Papain inhibitor (pi).